A 453-amino-acid chain; its full sequence is Probable 1,4-beta-D-glucan cellobiohydrolase A (453 aa).

The signal sequence occupies residues 1-17; that stretch reads MYQRALLFSALATAVSA. Glu226 acts as the Nucleophile in catalysis. Glu231 (proton donor) is an active-site residue. The N-linked (GlcNAc...) asparagine glycan is linked to Asn284.

This sequence belongs to the glycosyl hydrolase 7 (cellulase C) family.

It localises to the secreted. The catalysed reaction is Hydrolysis of (1-&gt;4)-beta-D-glucosidic linkages in cellulose and cellotetraose, releasing cellobiose from the non-reducing ends of the chains.. Its function is as follows. The biological conversion of cellulose to glucose generally requires three types of hydrolytic enzymes: (1) Endoglucanases which cut internal beta-1,4-glucosidic bonds; (2) Exocellobiohydrolases that cut the disaccharide cellobiose from the non-reducing end of the cellulose polymer chain; (3) Beta-1,4-glucosidases which hydrolyze the cellobiose and other short cello-oligosaccharides to glucose. The sequence is that of Probable 1,4-beta-D-glucan cellobiohydrolase A (cbhA) from Aspergillus clavatus (strain ATCC 1007 / CBS 513.65 / DSM 816 / NCTC 3887 / NRRL 1 / QM 1276 / 107).